Reading from the N-terminus, the 267-residue chain is MTRKYTKKSSGSTASTTNSTAEIVDLTTSTSSVGKKRKSPDEKAQPITKKALNSLTPVQSMFEKYKGKNIIKAIHYTYLYTYIFNVHLDDDETIGPEGIARFCSDIGLAPDSFEILVLAWTMNASKMGYFSKNEFSSGFEKLQCSDLSTLKKQLNSTSQKLKHDSTKFTDLYKYAFGFASEVESKKSVDLGTAAEMLKLLLPEGPHTTNFAAFLCTQPNKSINKDQWLCFLEFSRTVKADLSNYDDSEAWPLLLDQFSEWVQQEKRI.

Residues M1–T48 form a disordered region. Positions K8 to A21 are enriched in low complexity. The DCUN1 domain maps to H75–Q262.

The polypeptide is DCN1-like protein 2 (Dictyostelium discoideum (Social amoeba)).